A 248-amino-acid polypeptide reads, in one-letter code: Clathrin light chain A (248 aa).

The disordered stretch occupies residues 1 to 92 (MAELDPFGAP…YYQESNGPTD (92 aa)). The span at 13-25 (APGGPALGNGVAG) shows a compositional bias: gly residues. The segment covering 61 to 71 (GPQPHGEPPGG) has biased composition (pro residues). Residues 100–162 (VDRLQSEPES…QLQKTKANNR (63 aa)) are involved in binding clathrin heavy chain. 2 positions are modified to phosphoserine: serine 105 and serine 206. Lysine 223 is subject to N6-acetyllysine. Serine 236 is modified (phosphoserine). Lysine 242 is modified (N6-acetyllysine).

This sequence belongs to the clathrin light chain family. As to quaternary structure, clathrin coats are formed from molecules containing 3 heavy chains and 3 light chains. Interacts with CALY; the interaction stimulates clathrin self-assembly and clathrin-mediated endocytosis. Interacts with CKAP5 and TACC3 forming the TACC3/ch-TOG/clathrin complex located at spindle inter-microtubules bridges; the complex implicates clathrin triskelions.

It is found in the cytoplasmic vesicle membrane. The protein resides in the membrane. It localises to the coated pit. Its subcellular location is the cytoplasm. The protein localises to the cytoskeleton. It is found in the spindle. Clathrin is the major protein of the polyhedral coat of coated pits and vesicles. Acts as a component of the TACC3/ch-TOG/clathrin complex proposed to contribute to stabilization of kinetochore fibers of the mitotic spindle by acting as inter-microtubule bridge. The chain is Clathrin light chain A (CLTA) from Homo sapiens (Human).